Consider the following 429-residue polypeptide: Small ribosomal subunit protein uS5m (429 aa).

Residues 108–127 are disordered; the sequence is AGAKKGRGKRTKKKKRKDLN. Positions 111-125 are enriched in basic residues; the sequence is KKGRGKRTKKKKRKD. The region spanning 218 to 282 is the S5 DRBM domain; that stretch reads FDTRILEVRN…NRAVHHLYYI (65 aa).

This sequence belongs to the universal ribosomal protein uS5 family. As to quaternary structure, component of the mitochondrial ribosome small subunit (28S) which comprises a 12S rRNA and about 30 distinct proteins.

It is found in the mitochondrion. This Pongo abelii (Sumatran orangutan) protein is Small ribosomal subunit protein uS5m (MRPS5).